Consider the following 80-residue polypeptide: Raniseptin-6 (80 aa).

The signal sequence occupies residues 1-22 (MAFLKKSLFLVLFLGIVSLSIC). Positions 23-49 (EEEKREGEEEEKQEEENEELSEEELRE) are excised as a propeptide.

It belongs to the frog skin active peptide (FSAP) family. Dermaseptin subfamily. In terms of tissue distribution, expressed by the skin glands.

It localises to the secreted. Its function is as follows. Has antibacterial activity. The sequence is that of Raniseptin-6 from Boana raniceps (Chaco tree frog).